The sequence spans 815 residues: Leucine--tRNA ligase (815 aa).

The 'HIGH' region signature appears at 42–52 (PYPSGRLHMGH). A 'KMSKS' region motif is present at residues 571–575 (KMSKS). Lys-574 is a binding site for ATP.

The protein belongs to the class-I aminoacyl-tRNA synthetase family.

Its subcellular location is the cytoplasm. It catalyses the reaction tRNA(Leu) + L-leucine + ATP = L-leucyl-tRNA(Leu) + AMP + diphosphate. This Vesicomyosocius okutanii subsp. Calyptogena okutanii (strain HA) protein is Leucine--tRNA ligase.